The chain runs to 342 residues: Sideroflexin-5 (342 aa).

Residues 1 to 24 are compositionally biased toward low complexity; that stretch reads MADTATTASAASAAASASNASSDA. The segment at 1–29 is disordered; the sequence is MADTATTASAASAAASASNASSDAPPFQL. The next 4 membrane-spanning stretches (helical) occupy residues 105–125, 165–185, 256–276, and 289–309; these read IFMP…VVGL, FIQG…GLNV, LTRV…MSML, and LLPV…PLAI.

It belongs to the sideroflexin family. As to expression, specifically expressed in the brain.

It is found in the mitochondrion inner membrane. It carries out the reaction citrate(in) = citrate(out). Mitochondrial amino-acid transporter. Transports citrate. Does not act as a serine transporter: not able to mediate transport of serine into mitochondria. In brown adipose tissue, plays a role in the regulation of UCP1-dependent thermogenesis probably by supporting mitochondrial glycerol-3-phosphate utilization. The sequence is that of Sideroflexin-5 from Rattus norvegicus (Rat).